Here is a 515-residue protein sequence, read N- to C-terminus: 1-pyrroline-5-carboxylate dehydrogenase 2 (515 aa).

Active-site residues include E286 and C320.

Belongs to the aldehyde dehydrogenase family. RocA subfamily.

The catalysed reaction is L-glutamate 5-semialdehyde + NAD(+) + H2O = L-glutamate + NADH + 2 H(+). It participates in amino-acid degradation; L-proline degradation into L-glutamate; L-glutamate from L-proline: step 2/2. The sequence is that of 1-pyrroline-5-carboxylate dehydrogenase 2 (rocA2) from Halalkalibacterium halodurans (strain ATCC BAA-125 / DSM 18197 / FERM 7344 / JCM 9153 / C-125) (Bacillus halodurans).